Here is a 342-residue protein sequence, read N- to C-terminus: Ion-translocating oxidoreductase complex subunit D (342 aa).

3 consecutive transmembrane segments (helical) span residues 42–62, 68–90, and 124–144; these read GSVI…ALFL, NIAF…LALP, and AMVG…QWLA. Threonine 171 carries the FMN phosphoryl threonine modification. Transmembrane regions (helical) follow at residues 200-220, 227-247, 252-272, 286-306, and 308-328; these read FAGL…LYLI, WHIP…AWLI, FADP…FFIA, LVYA…GGYP, and AVAF…YYTQ.

The protein belongs to the NqrB/RnfD family. The complex is composed of six subunits: RnfA, RnfB, RnfC, RnfD, RnfE and RnfG. It depends on FMN as a cofactor.

It localises to the cell inner membrane. In terms of biological role, part of a membrane-bound complex that couples electron transfer with translocation of ions across the membrane. The protein is Ion-translocating oxidoreductase complex subunit D of Alcanivorax borkumensis (strain ATCC 700651 / DSM 11573 / NCIMB 13689 / SK2).